A 632-amino-acid polypeptide reads, in one-letter code: tRNA uridine 5-carboxymethylaminomethyl modification enzyme MnmG (632 aa).

FAD is bound by residues 15–20 (GAGHAG), Ile-127, and Ser-182. 276–290 (GPRYCPSIEDKIVRF) contacts NAD(+). Gln-373 serves as a coordination point for FAD.

The protein belongs to the MnmG family. As to quaternary structure, homodimer. Heterotetramer of two MnmE and two MnmG subunits. FAD serves as cofactor.

The protein resides in the cytoplasm. NAD-binding protein involved in the addition of a carboxymethylaminomethyl (cmnm) group at the wobble position (U34) of certain tRNAs, forming tRNA-cmnm(5)s(2)U34. In Streptococcus pyogenes serotype M1, this protein is tRNA uridine 5-carboxymethylaminomethyl modification enzyme MnmG.